A 141-amino-acid polypeptide reads, in one-letter code: Arsenate reductase (141 aa).

Cysteine 12 acts as the Nucleophile; cysteine thioarsenate intermediate in catalysis.

It belongs to the ArsC family.

It carries out the reaction [glutaredoxin]-dithiol + arsenate + glutathione + H(+) = glutathionyl-S-S-[glutaredoxin] + arsenite + H2O. In terms of biological role, involved in resistance to arsenate. Catalyzes the reduction of arsenate [As(V)] to arsenite [As(III)]. This chain is Arsenate reductase, found in Escherichia coli.